Consider the following 251-residue polypeptide: uncharacterized protein (251 aa).

Residues 1–18 form the signal peptide; that stretch reads MRILIILSIILCSFFARA.

The protein belongs to the MlaA family.

This is an uncharacterized protein from Rickettsia typhi (strain ATCC VR-144 / Wilmington).